A 702-amino-acid chain; its full sequence is Ribosomal RNA large subunit methyltransferase K/L (702 aa).

The THUMP domain maps to 43-154; sequence LIYQSLMWSR…KETASIALDL (112 aa).

This sequence belongs to the methyltransferase superfamily. RlmKL family.

It localises to the cytoplasm. It carries out the reaction guanosine(2445) in 23S rRNA + S-adenosyl-L-methionine = N(2)-methylguanosine(2445) in 23S rRNA + S-adenosyl-L-homocysteine + H(+). It catalyses the reaction guanosine(2069) in 23S rRNA + S-adenosyl-L-methionine = N(2)-methylguanosine(2069) in 23S rRNA + S-adenosyl-L-homocysteine + H(+). Specifically methylates the guanine in position 2445 (m2G2445) and the guanine in position 2069 (m7G2069) of 23S rRNA. The protein is Ribosomal RNA large subunit methyltransferase K/L of Salmonella gallinarum (strain 287/91 / NCTC 13346).